A 497-amino-acid polypeptide reads, in one-letter code: Probable cytosol aminopeptidase (497 aa).

Positions 263 and 268 each coordinate Mn(2+). Lysine 275 is an active-site residue. Residues aspartate 286, aspartate 345, and glutamate 347 each contribute to the Mn(2+) site. Residue arginine 349 is part of the active site.

It belongs to the peptidase M17 family. Requires Mn(2+) as cofactor.

The protein localises to the cytoplasm. The catalysed reaction is Release of an N-terminal amino acid, Xaa-|-Yaa-, in which Xaa is preferably Leu, but may be other amino acids including Pro although not Arg or Lys, and Yaa may be Pro. Amino acid amides and methyl esters are also readily hydrolyzed, but rates on arylamides are exceedingly low.. It carries out the reaction Release of an N-terminal amino acid, preferentially leucine, but not glutamic or aspartic acids.. In terms of biological role, presumably involved in the processing and regular turnover of intracellular proteins. Catalyzes the removal of unsubstituted N-terminal amino acids from various peptides. The chain is Probable cytosol aminopeptidase from Brucella ovis (strain ATCC 25840 / 63/290 / NCTC 10512).